Here is a 154-residue protein sequence, read N- to C-terminus: Superoxide dismutase [Cu-Zn] (154 aa).

3 residues coordinate Cu cation: His-47, His-49, and His-64. A disulfide bond links Cys-58 and Cys-147. The Zn(2+) site is built by His-64, His-72, His-81, and Asp-84. His-121 is a Cu cation binding site. Arg-144 serves as a coordination point for substrate.

It belongs to the Cu-Zn superoxide dismutase family. Homodimer. Cu cation serves as cofactor. It depends on Zn(2+) as a cofactor.

Its subcellular location is the cytoplasm. The enzyme catalyses 2 superoxide + 2 H(+) = H2O2 + O2. Its function is as follows. Destroys radicals which are normally produced within the cells and which are toxic to biological systems. The polypeptide is Superoxide dismutase [Cu-Zn] (SOD1) (Eremothecium gossypii (strain ATCC 10895 / CBS 109.51 / FGSC 9923 / NRRL Y-1056) (Yeast)).